A 167-amino-acid chain; its full sequence is Endoribonuclease YbeY (167 aa).

Zn(2+) is bound by residues His-126, His-130, and His-136.

Belongs to the endoribonuclease YbeY family. The cofactor is Zn(2+).

The protein resides in the cytoplasm. In terms of biological role, single strand-specific metallo-endoribonuclease involved in late-stage 70S ribosome quality control and in maturation of the 3' terminus of the 16S rRNA. The chain is Endoribonuclease YbeY from Novosphingobium aromaticivorans (strain ATCC 700278 / DSM 12444 / CCUG 56034 / CIP 105152 / NBRC 16084 / F199).